Here is a 78-residue protein sequence, read N- to C-terminus: Defensin-like protein 74 (78 aa).

A signal peptide spans 1–28 (MNYKIGIMSLLVITSIIFLFLVPDKVEA). Disulfide bonds link C32/C73, C36/C58, C42/C71, and C46/C72.

The protein belongs to the DEFL family.

The protein localises to the secreted. In Arabidopsis thaliana (Mouse-ear cress), this protein is Defensin-like protein 74 (LCR43).